Consider the following 125-residue polypeptide: Small ribosomal subunit protein uS13 (125 aa).

The segment at 90–125 (QRHRKGLPVRGQRTKTNARTRKGPKRTVAGKKKATK) is disordered.

It belongs to the universal ribosomal protein uS13 family. Part of the 30S ribosomal subunit. Forms a loose heterodimer with protein S19. Forms two bridges to the 50S subunit in the 70S ribosome.

Its function is as follows. Located at the top of the head of the 30S subunit, it contacts several helices of the 16S rRNA. In the 70S ribosome it contacts the 23S rRNA (bridge B1a) and protein L5 of the 50S subunit (bridge B1b), connecting the 2 subunits; these bridges are implicated in subunit movement. Contacts the tRNAs in the A and P-sites. The polypeptide is Small ribosomal subunit protein uS13 (Bifidobacterium adolescentis (strain ATCC 15703 / DSM 20083 / NCTC 11814 / E194a)).